An 893-amino-acid chain; its full sequence is Translation initiation factor IF-2 (893 aa).

Disordered regions lie at residues 51-203 (KEHG…AEAE) and 216-299 (EENE…TSMQ). Basic and acidic residues-rich tracts occupy residues 102–203 (ALEE…AEAE), 216–238 (EENE…DADY), and 245–261 (HARE…EQQP). The tr-type G domain occupies 392-561 (GRAPVVTIMG…LLQSEVLELT (170 aa)). A G1 region spans residues 401–408 (GHVDHGKT). 401 to 408 (GHVDHGKT) contacts GTP. The segment at 426 to 430 (GITQH) is G2. The segment at 447–450 (DTPG) is G3. GTP is bound by residues 447 to 451 (DTPGH) and 501 to 504 (NKID). The segment at 501–504 (NKID) is G4. Positions 537–539 (SAK) are G5.

The protein belongs to the TRAFAC class translation factor GTPase superfamily. Classic translation factor GTPase family. IF-2 subfamily.

It localises to the cytoplasm. In terms of biological role, one of the essential components for the initiation of protein synthesis. Protects formylmethionyl-tRNA from spontaneous hydrolysis and promotes its binding to the 30S ribosomal subunits. Also involved in the hydrolysis of GTP during the formation of the 70S ribosomal complex. The chain is Translation initiation factor IF-2 from Aliivibrio fischeri (strain ATCC 700601 / ES114) (Vibrio fischeri).